Consider the following 49-residue polypeptide: Defensin Tk-AMP-D2 (49 aa).

Cystine bridges form between Cys3-Cys49, Cys14-Cys34, Cys20-Cys43, and Cys24-Cys45.

Plant defense peptide. The sequence is that of Defensin Tk-AMP-D2 from Triticum kiharae (Wheat).